Consider the following 194-residue polypeptide: Amidophosphoribosyltransferase (194 aa).

Residues methionine 1–glutamate 11 constitute a propeptide that is removed on maturation. Catalysis depends on cysteine 12, which acts as the Nucleophile. Positions cysteine 12 to glycine 194 constitute a Glutamine amidotransferase type-2 domain.

The protein in the C-terminal section; belongs to the purine/pyrimidine phosphoribosyltransferase family.

The catalysed reaction is 5-phospho-beta-D-ribosylamine + L-glutamate + diphosphate = 5-phospho-alpha-D-ribose 1-diphosphate + L-glutamine + H2O. The protein operates within purine metabolism; IMP biosynthesis via de novo pathway; N(1)-(5-phospho-D-ribosyl)glycinamide from 5-phospho-alpha-D-ribose 1-diphosphate: step 1/2. Its function is as follows. Catalyzes the formation of phosphoribosylamine from phosphoribosylpyrophosphate (PRPP) and glutamine. In Lacticaseibacillus casei (Lactobacillus casei), this protein is Amidophosphoribosyltransferase.